A 345-amino-acid chain; its full sequence is Aspartate--ammonia ligase (345 aa).

The protein belongs to the class-II aminoacyl-tRNA synthetase family. AsnA subfamily.

The protein resides in the cytoplasm. It catalyses the reaction L-aspartate + NH4(+) + ATP = L-asparagine + AMP + diphosphate + H(+). It participates in amino-acid biosynthesis; L-asparagine biosynthesis; L-asparagine from L-aspartate (ammonia route): step 1/1. The chain is Aspartate--ammonia ligase from Bacteroides thetaiotaomicron (strain ATCC 29148 / DSM 2079 / JCM 5827 / CCUG 10774 / NCTC 10582 / VPI-5482 / E50).